The primary structure comprises 274 residues: MAIVKCKPTSPGRRFVVKVVNKELHKGAPHAPLIEKKSKSGGRNNNGRITTRHVGGGHKQHYRLVDFRRNDKDGIPATVERIEYDPNRTAHIALLCYADGERRYIIAPKGVSAGDQLIAGALAPIKAGNSLQLRNIPVGSTIHGIELKPGKGAQIARSAGASAQLIAREGVYVTLRLRSGEMRKVLAECRATLGEVSNSEHSLRSLGKAGAKRWRGVRPTVRGVAMNPVDHPHGGGEGRTSGGRHPVSPWGFPTKGAKTRGNKRTDNMIVRRRK.

Disordered regions lie at residues 28-55 (APHAPLIEKKSKSGGRNNNGRITTRHVG) and 224-274 (VAMN…RRRK).

Belongs to the universal ribosomal protein uL2 family. As to quaternary structure, part of the 50S ribosomal subunit. Forms a bridge to the 30S subunit in the 70S ribosome.

Its function is as follows. One of the primary rRNA binding proteins. Required for association of the 30S and 50S subunits to form the 70S ribosome, for tRNA binding and peptide bond formation. It has been suggested to have peptidyltransferase activity; this is somewhat controversial. Makes several contacts with the 16S rRNA in the 70S ribosome. This chain is Large ribosomal subunit protein uL2, found in Pseudomonas putida (strain ATCC 47054 / DSM 6125 / CFBP 8728 / NCIMB 11950 / KT2440).